The primary structure comprises 217 residues: Probable GTP-binding protein EngB (217 aa).

One can recognise an EngB-type G domain in the interval 32–205 (GTPQIAFAGR…RKIVYSLIET (174 aa)). GTP is bound by residues 40-47 (GRSNAGKS), 67-71 (GKTKL), 85-88 (DLPG), 152-155 (TKID), and 184-186 (VSN). Positions 47 and 69 each coordinate Mg(2+).

This sequence belongs to the TRAFAC class TrmE-Era-EngA-EngB-Septin-like GTPase superfamily. EngB GTPase family. Requires Mg(2+) as cofactor.

Functionally, necessary for normal cell division and for the maintenance of normal septation. In Leptospira interrogans serogroup Icterohaemorrhagiae serovar copenhageni (strain Fiocruz L1-130), this protein is Probable GTP-binding protein EngB.